Consider the following 547-residue polypeptide: Ribosomal lysine N-methyltransferase set10 (547 aa).

The SET domain maps to 17–235 (KSVEFIQSRD…KGNQLFNNYG (219 aa)). Tyr-234 is an S-adenosyl-L-methionine binding site.

The protein belongs to the class V-like SAM-binding methyltransferase superfamily. RKM1 family.

It localises to the cytoplasm. It is found in the nucleus. Functionally, S-adenosyl-L-methionine-dependent protein-lysine N-methyltransferase that methylates ribosomal protein L23 (rpl23a and rpl23b). This is Ribosomal lysine N-methyltransferase set10 (set10) from Schizosaccharomyces pombe (strain 972 / ATCC 24843) (Fission yeast).